The following is a 234-amino-acid chain: Octanoyltransferase (234 aa).

The BPL/LPL catalytic domain occupies 35-221 (DGAPELVWFL…AFQQVFASPL (187 aa)). Substrate is bound by residues 74–81 (RGGQYTYH), 150–152 (AIG), and 163–165 (GIS). Cysteine 181 acts as the Acyl-thioester intermediate in catalysis.

It belongs to the LipB family.

The protein localises to the cytoplasm. It carries out the reaction octanoyl-[ACP] + L-lysyl-[protein] = N(6)-octanoyl-L-lysyl-[protein] + holo-[ACP] + H(+). The protein operates within protein modification; protein lipoylation via endogenous pathway; protein N(6)-(lipoyl)lysine from octanoyl-[acyl-carrier-protein]: step 1/2. Functionally, catalyzes the transfer of endogenously produced octanoic acid from octanoyl-acyl-carrier-protein onto the lipoyl domains of lipoate-dependent enzymes. Lipoyl-ACP can also act as a substrate although octanoyl-ACP is likely to be the physiological substrate. The sequence is that of Octanoyltransferase from Hyphomonas neptunium (strain ATCC 15444).